The primary structure comprises 320 residues: tRNA(Ile)-lysidine synthase (320 aa).

33-38 (SGGPDS) contacts ATP.

Belongs to the tRNA(Ile)-lysidine synthase family.

The protein resides in the cytoplasm. It carries out the reaction cytidine(34) in tRNA(Ile2) + L-lysine + ATP = lysidine(34) in tRNA(Ile2) + AMP + diphosphate + H(+). Ligates lysine onto the cytidine present at position 34 of the AUA codon-specific tRNA(Ile) that contains the anticodon CAU, in an ATP-dependent manner. Cytidine is converted to lysidine, thus changing the amino acid specificity of the tRNA from methionine to isoleucine. The protein is tRNA(Ile)-lysidine synthase of Mycolicibacterium paratuberculosis (strain ATCC BAA-968 / K-10) (Mycobacterium paratuberculosis).